A 257-amino-acid chain; its full sequence is Short-chain dehydrogenase reductase 3a (257 aa).

Position 12-36 (12-36 (IITGGASGIGAEAVRLFTDHGAKVV)) interacts with NAD(+). A substrate-binding site is contributed by serine 144. The Proton acceptor role is filled by tyrosine 157.

It belongs to the short-chain dehydrogenases/reductases (SDR) family. In terms of tissue distribution, highly expressed in the radicle tip, lateral root primordia and tips, and the area surrounding the cotyledon hydathode of young seedlings.

Functionally, confers resistance to the incompatible pathogenic bacteria P.syringae pv. tomato DC3000 in a PR1-dependent manner. Seems not involved in abscisic acid (ABA) biosynthesis. This Arabidopsis thaliana (Mouse-ear cress) protein is Short-chain dehydrogenase reductase 3a (SDR3a).